The chain runs to 1271 residues: Period circadian protein (1271 aa).

Residues 1-14 (MEGESTESTQNTKV) show a composition bias toward polar residues. A disordered region spans residues 1 to 102 (MEGESTESTQ…AEEQPHSSGT (102 aa)). Positions 15–46 (SDSAYSNSCSNSQSQRSGSSKSMLSGSHSSGS) are enriched in low complexity. The Nuclear localization signal signature appears at 65 to 78 (KRNKEKSRKKKKAK). Over residues 65 to 78 (KRNKEKSRKKKKAK) the composition is skewed to basic residues. Polar residues predominate over residues 80–90 (TQAQATISSSL). 2 consecutive PAS domains span residues 189 to 259 (TGPA…IPIA) and 339 to 409 (YRVP…MKKG). The tract at residues 596–660 (APVEVDPPKV…TNTSNAGTGT (65 aa)) is disordered. 3 repeat units span residues 657 to 658 (GT), 659 to 660 (GT), and 661 to 662 (GT). The 8 X 2 AA approximate tandem repeats of G-T stretch occupies residues 657–677 (GTGTGTVTGTGTIIATSGTGT). Residues 663 to 664 (VT) form a 4; approximate repeat. Tandem repeats lie at residues 665-666 (GT), 667-668 (GT), 674-675 (GT), and 676-677 (GT). 2 stretches are compositionally biased toward polar residues: residues 746-772 (GAEN…NSAA) and 781-803 (GPDN…SGAE). Disordered regions lie at residues 746–913 (GAEN…VEKN), 928–956 (EYSS…PKQQ), 1014–1050 (PAPG…QQAA), 1143–1191 (TPAQ…NSNQ), and 1227–1271 (KTTD…HGDG). 2 stretches are compositionally biased toward basic and acidic residues: residues 805 to 822 (SRAE…HPRP) and 831 to 841 (RPDKTGPDKSG). The span at 864–884 (QDTRTTAGTPDSPPVSLTESL) shows a compositional bias: polar residues. Composition is skewed to basic and acidic residues over residues 885–896 (LNKHNDEMEKFM) and 903–913 (SRGDRRTVEKN). Over residues 1014–1023 (PAPGALSPTP) the composition is skewed to low complexity. A compositionally biased stretch (basic residues) spans 1025–1036 (NQKHHHHAHQHA). The span at 1143-1167 (TPAQLQRPSSQDTSVKTEPASNATP) shows a compositional bias: polar residues. Residues 1257–1271 (IMEHPEEDQTQHGDG) show a composition bias toward basic and acidic residues.

As to quaternary structure, forms a heterodimer with timeless (TIM); the complex then translocates into the nucleus. Phosphorylated with a circadian rhythmicity, probably by the double-time protein (dbt). Phosphorylation could be implicated in the stability of per monomer and in the formation of heterodimer per-tim.

Its subcellular location is the nucleus. It is found in the cytoplasm. The protein resides in the perinuclear region. In terms of biological role, essential for biological clock functions. Determines the period length of circadian and ultradian rhythms; an increase in PER dosage leads to shortened circadian rhythms and a decrease leads to lengthened circadian rhythms. Essential for the circadian rhythmicity of locomotor activity, eclosion behavior, and for the rhythmic component of the male courtship song that originates in the thoracic nervous system. The biological cycle depends on the rhythmic formation and nuclear localization of the TIM-PER complex. Light induces the degradation of TIM, which promotes elimination of PER. Nuclear activity of the heterodimer coordinatively regulates PER and TIM transcription through a negative feedback loop. Behaves as a negative element in circadian transcriptional loop. Does not appear to bind DNA, suggesting indirect transcriptional inhibition. In Drosophila pseudoobscura pseudoobscura (Fruit fly), this protein is Period circadian protein (per).